The sequence spans 315 residues: Ribosomal RNA small subunit methyltransferase H (315 aa).

S-adenosyl-L-methionine-binding positions include 37–39 (GGH), D57, F83, D105, and Q112.

It belongs to the methyltransferase superfamily. RsmH family.

The protein resides in the cytoplasm. It catalyses the reaction cytidine(1402) in 16S rRNA + S-adenosyl-L-methionine = N(4)-methylcytidine(1402) in 16S rRNA + S-adenosyl-L-homocysteine + H(+). Its function is as follows. Specifically methylates the N4 position of cytidine in position 1402 (C1402) of 16S rRNA. This chain is Ribosomal RNA small subunit methyltransferase H, found in Pseudomonas putida (strain W619).